We begin with the raw amino-acid sequence, 1201 residues long: ATPase with bromodomain protein abo2 (1201 aa).

2 disordered regions span residues 1 to 223 and 305 to 324; these read MRRR…MRGP and CDSDETSELSSTSSEQTSDV. Residues 13 to 24 show a composition bias toward acidic residues; the sequence is DDNEDNEEDDDY. Residues 29–38 show a composition bias toward basic and acidic residues; it reads HSEKSEDHSN. A compositionally biased stretch (polar residues) spans 66–89; sequence FSSLQKHLNTETPSFSVSIENPSK. The span at 129–146 shows a compositional bias: acidic residues; that stretch reads TDNNEDESTTFKDEEDDL. Residues 212–221 show a composition bias toward basic residues; the sequence is RRGRRKRKMR. The segment covering 312 to 323 has biased composition (low complexity); the sequence is ELSSTSSEQTSD. Position 413 to 420 (413 to 420) interacts with ATP; it reads GPPGTGKT. A Bromo domain is found at 897-1026; that stretch reads KIKNKIQVKL…AHAELNVDEL (130 aa).

This sequence belongs to the AAA ATPase family.

It is found in the nucleus. It catalyses the reaction ATP + H2O = ADP + phosphate + H(+). In terms of biological role, probable ATPase which may play a role in nucleosome organization. This is ATPase with bromodomain protein abo2 from Schizosaccharomyces pombe (strain 972 / ATCC 24843) (Fission yeast).